The following is a 680-amino-acid chain: Zinc finger protein 334 (680 aa).

Residues valine 10–aspartate 81 form the KRAB domain. C2H2-type zinc fingers lie at residues asparagine 237 to histidine 259, tyrosine 265 to histidine 287, tyrosine 293 to histidine 315, tyrosine 321 to histidine 343, tyrosine 349 to histidine 371, asparagine 377 to histidine 399, tyrosine 405 to histidine 427, tyrosine 433 to histidine 455, tyrosine 461 to histidine 483, tyrosine 544 to histidine 566, tyrosine 572 to histidine 594, tyrosine 600 to histidine 622, tyrosine 628 to histidine 650, and tyrosine 656 to histidine 678.

It belongs to the krueppel C2H2-type zinc-finger protein family.

The protein localises to the nucleus. Functionally, may be involved in transcriptional regulation. In Homo sapiens (Human), this protein is Zinc finger protein 334 (ZNF334).